Here is a 913-residue protein sequence, read N- to C-terminus: Protein translocase subunit SecA (913 aa).

Residues Gln87, 105 to 109 (GEGKT), and Asp517 each bind ATP. Disordered regions lie at residues 568–588 (ESRR…DPGS) and 871–913 (EVAV…GKLS). Residues Cys897, Cys899, Cys908, and His909 each contribute to the Zn(2+) site. Basic residues predominate over residues 903–913 (KKYKQCHGKLS).

This sequence belongs to the SecA family. As to quaternary structure, monomer and homodimer. Part of the essential Sec protein translocation apparatus which comprises SecA, SecYEG and auxiliary proteins SecDF-YajC and YidC. The cofactor is Zn(2+).

Its subcellular location is the cell inner membrane. It localises to the cytoplasm. The enzyme catalyses ATP + H2O + cellular proteinSide 1 = ADP + phosphate + cellular proteinSide 2.. Functionally, part of the Sec protein translocase complex. Interacts with the SecYEG preprotein conducting channel. Has a central role in coupling the hydrolysis of ATP to the transfer of proteins into and across the cell membrane, serving both as a receptor for the preprotein-SecB complex and as an ATP-driven molecular motor driving the stepwise translocation of polypeptide chains across the membrane. The protein is Protein translocase subunit SecA of Coxiella burnetii (strain RSA 493 / Nine Mile phase I).